The chain runs to 95 residues: Small ribosomal subunit protein bS18 (95 aa).

Belongs to the bacterial ribosomal protein bS18 family. Part of the 30S ribosomal subunit. Forms a tight heterodimer with protein bS6.

Functionally, binds as a heterodimer with protein bS6 to the central domain of the 16S rRNA, where it helps stabilize the platform of the 30S subunit. The protein is Small ribosomal subunit protein bS18 of Rickettsia akari (strain Hartford).